The chain runs to 512 residues: Kelch repeat protein C2 (512 aa).

In terms of domain architecture, BTB spans E2–I67. One can recognise a BACK domain in the interval C102–N176. 6 Kelch repeats span residues I216 to C261, L262 to G307, L309 to D354, I356 to G403, I405 to D449, and L452 to S498.

It belongs to the poxviruses Kelch family.

The protein is Kelch repeat protein C2 of Rabbitpox virus (strain Utrecht) (RPV).